The sequence spans 493 residues: Zinc finger CCCH domain-containing protein 34 (493 aa).

3 consecutive C3H1-type zinc fingers follow at residues 14 to 43 (RRCN…HADG), 45 to 71 (RFNR…HPPL), and 91 to 118 (VKAA…HEPL). The tract at residues 397–477 (MGECPQPANH…SFSDDFEGPK (81 aa)) is disordered. A compositionally biased stretch (basic residues) spans 409 to 420 (FRGRRKKNRGKQ). Residues 452-468 (SNSSFSHSTACTPNVRS) are compositionally biased toward polar residues.

The chain is Zinc finger CCCH domain-containing protein 34 from Oryza sativa subsp. japonica (Rice).